The following is a 356-amino-acid chain: Phosphoribosyl pyrophosphate synthase-associated protein 1 (356 aa).

Position 1 is an N-acetylmethionine (methionine 1). Phosphoserine occurs at positions 177 and 215.

The protein belongs to the ribose-phosphate pyrophosphokinase family. In terms of assembly, binds to PRPS1 and PRPS2. As to expression, ubiquitous.

Its function is as follows. Seems to play a negative regulatory role in 5-phosphoribose 1-diphosphate synthesis. The protein is Phosphoribosyl pyrophosphate synthase-associated protein 1 (Prpsap1) of Rattus norvegicus (Rat).